Consider the following 139-residue polypeptide: D-ribose pyranase (139 aa).

The active-site Proton donor is H20. Substrate is bound by residues D28, H106, and 128 to 130; that span reads YAN.

Belongs to the RbsD / FucU family. RbsD subfamily. As to quaternary structure, homodecamer.

It localises to the cytoplasm. The catalysed reaction is beta-D-ribopyranose = beta-D-ribofuranose. It participates in carbohydrate metabolism; D-ribose degradation; D-ribose 5-phosphate from beta-D-ribopyranose: step 1/2. Catalyzes the interconversion of beta-pyran and beta-furan forms of D-ribose. In Histophilus somni (strain 2336) (Haemophilus somnus), this protein is D-ribose pyranase.